The following is a 189-amino-acid chain: Elongation factor P (189 aa).

Position 34 is an N6-(3,6-diaminohexanoyl)-5-hydroxylysine (K34).

Belongs to the elongation factor P family. Post-translationally, may be beta-lysylated on the epsilon-amino group of Lys-34 by the combined action of EpmA and EpmB, and then hydroxylated on the C5 position of the same residue by EpmC (if this protein is present). Lysylation is critical for the stimulatory effect of EF-P on peptide-bond formation. The lysylation moiety may extend toward the peptidyltransferase center and stabilize the terminal 3-CCA end of the tRNA. Hydroxylation of the C5 position on Lys-34 may allow additional potential stabilizing hydrogen-bond interactions with the P-tRNA.

Its subcellular location is the cytoplasm. The protein operates within protein biosynthesis; polypeptide chain elongation. Involved in peptide bond synthesis. Alleviates ribosome stalling that occurs when 3 or more consecutive Pro residues or the sequence PPG is present in a protein, possibly by augmenting the peptidyl transferase activity of the ribosome. Modification of Lys-34 is required for alleviation. This chain is Elongation factor P, found in Francisella tularensis subsp. tularensis (strain FSC 198).